Reading from the N-terminus, the 170-residue chain is uncharacterized protein (170 aa).

An N-terminal signal peptide occupies residues 1 to 28; it reads MTGGVMSQKFVVGAGLLVCSVCSLSAMA.

This sequence belongs to the fimbrial protein family.

Part of the yfcOPQRSUV fimbrial operon. Could contribute to adhesion to various surfaces in specific environmental niches. Increases adhesion to eukaryotic T24 bladder epithelial cells in the absence of fim genes. This is an uncharacterized protein from Escherichia coli (strain K12).